The chain runs to 382 residues: Inactive serine protease 54 (382 aa).

A signal peptide spans 1–20; the sequence is MAELRGILLLLLYMSHSSSA. The 230-residue stretch at 29–258 folds into the Peptidase S1 domain; it reads IVDQLHENLV…YSNWIIAKTR (230 aa). Residue asparagine 113 is glycosylated (N-linked (GlcNAc...) asparagine). Cystine bridges form between cysteine 154–cysteine 216, cysteine 185–cysteine 195, and cysteine 206–cysteine 237.

This sequence belongs to the peptidase S1 family. Plasma kallikrein subfamily.

It is found in the secreted. The sequence is that of Inactive serine protease 54 (Prss54) from Rattus norvegicus (Rat).